A 126-amino-acid polypeptide reads, in one-letter code: Cystatin-like cysteine protease inhibitor EPIC1 (126 aa).

The signal sequence occupies residues 1-21 (MTFLRPILALLAATALVTTSA). N-linked (GlcNAc...) asparagine glycosylation occurs at asparagine 46. The Secondary area of contact signature appears at 69 to 73 (QVVSG).

It belongs to the cystatin family. In terms of assembly, interacts with the host papain-like cysteine protease RCR3. Interacts with the host papain-like cysteine protease C14.

The protein localises to the secreted. Functionally, secreted effector that interacts with and inhibits the pathogenesis-related papain-like cysteine proteases C14 and RCR3 of host plants. Inhibition of host proteases by a pathogen extracellular protease inhibitor forms a specific type of defense-counterdefense mechanism between plants and microbial pathogens. The polypeptide is Cystatin-like cysteine protease inhibitor EPIC1 (Phytophthora infestans (Potato late blight agent)).